A 466-amino-acid chain; its full sequence is ATP synthase subunit beta (466 aa).

155–162 (GGAGVGKT) provides a ligand contact to ATP.

This sequence belongs to the ATPase alpha/beta chains family. As to quaternary structure, F-type ATPases have 2 components, CF(1) - the catalytic core - and CF(0) - the membrane proton channel. CF(1) has five subunits: alpha(3), beta(3), gamma(1), delta(1), epsilon(1). CF(0) has three main subunits: a(1), b(2) and c(9-12). The alpha and beta chains form an alternating ring which encloses part of the gamma chain. CF(1) is attached to CF(0) by a central stalk formed by the gamma and epsilon chains, while a peripheral stalk is formed by the delta and b chains.

It is found in the cell inner membrane. The catalysed reaction is ATP + H2O + 4 H(+)(in) = ADP + phosphate + 5 H(+)(out). Functionally, produces ATP from ADP in the presence of a proton gradient across the membrane. The catalytic sites are hosted primarily by the beta subunits. This Bordetella pertussis (strain Tohama I / ATCC BAA-589 / NCTC 13251) protein is ATP synthase subunit beta.